The following is a 626-amino-acid chain: Chaperone protein HtpG (626 aa).

An a; substrate-binding region spans residues 1–341 (METKQFKAES…SEDLSLNISR (341 aa)). The segment at 342 to 552 (EILQHDRQLK…EGELSIEMEK (211 aa)) is b. A c region spans residues 553-626 (VLNAMPNNQN…FTNNICKIMK (74 aa)).

This sequence belongs to the heat shock protein 90 family. As to quaternary structure, homodimer.

Its subcellular location is the cytoplasm. In terms of biological role, molecular chaperone. Has ATPase activity. This chain is Chaperone protein HtpG, found in Clostridium botulinum (strain 657 / Type Ba4).